A 124-amino-acid chain; its full sequence is Large ribosomal subunit protein uL18 (124 aa).

Belongs to the universal ribosomal protein uL18 family. As to quaternary structure, part of the 50S ribosomal subunit; part of the 5S rRNA/L5/L18/L25 subcomplex. Contacts the 5S and 23S rRNAs.

This is one of the proteins that bind and probably mediate the attachment of the 5S RNA into the large ribosomal subunit, where it forms part of the central protuberance. In Aquifex aeolicus (strain VF5), this protein is Large ribosomal subunit protein uL18.